Reading from the N-terminus, the 198-residue chain is MVTTYLLFIVAYLLGSIPFALVVGKIGYGIDIREHGSGNLGGTNTFRTLGKKAGFIVTIADILKGTLATSLPMVFGLDIHPLWFGLAAVLGHVYPIFAKFRGGKAVATSAGVLLCYSPVVFAILAVVFFTLLFTTRYVSLSSMVTAVVAVIASIVSGDKIFIIAMCLLAGMVIYKHRANIGRIINKTEPKANFSKKQK.

4 helical membrane passes run 4–24 (TYLL…LVVG), 71–91 (LPMV…AVLG), 113–133 (LLCY…TLLF), and 147–167 (VVAV…AMCL).

It belongs to the PlsY family. As to quaternary structure, probably interacts with PlsX.

Its subcellular location is the cell membrane. The catalysed reaction is an acyl phosphate + sn-glycerol 3-phosphate = a 1-acyl-sn-glycero-3-phosphate + phosphate. It participates in lipid metabolism; phospholipid metabolism. In terms of biological role, catalyzes the transfer of an acyl group from acyl-phosphate (acyl-PO(4)) to glycerol-3-phosphate (G3P) to form lysophosphatidic acid (LPA). This enzyme utilizes acyl-phosphate as fatty acyl donor, but not acyl-CoA or acyl-ACP. This is Glycerol-3-phosphate acyltransferase 2 from Bacillus cereus (strain ZK / E33L).